The primary structure comprises 122 residues: Basic phospholipase A2 Cdr-12 (122 aa).

Disulfide bonds link C26-C115, C28-C44, C43-C95, C49-C122, C50-C88, C57-C81, and C75-C86. Ca(2+) is bound by residues Y27, G29, and G31. H47 is an active-site residue. Residue D48 participates in Ca(2+) binding. The active site involves D89.

Requires Ca(2+) as cofactor. In terms of tissue distribution, expressed by the venom gland.

The protein resides in the secreted. It catalyses the reaction a 1,2-diacyl-sn-glycero-3-phosphocholine + H2O = a 1-acyl-sn-glycero-3-phosphocholine + a fatty acid + H(+). Snake venom phospholipase A2 (PLA2) that induces myonecrosis and edema upon intramuscular injections in mice. In vitro, causes a potent blockade of neuromuscular transmission in young chicken biventer cervicis preparation and produces cytotoxicity in murine C2C12 skeletal muscle myotubes and lack cytolytic activity upon myoblasts in vitro. PLA2 catalyzes the calcium-dependent hydrolysis of the 2-acyl groups in 3-sn-phosphoglycerides. This is Basic phospholipase A2 Cdr-12 from Crotalus durissus ruruima (South American rattlesnake).